A 250-amino-acid polypeptide reads, in one-letter code: Hydroxyethylthiazole kinase (250 aa).

A substrate-binding site is contributed by methionine 39. The ATP site is built by arginine 114 and threonine 159. Residue glycine 186 coordinates substrate.

It belongs to the Thz kinase family. Mg(2+) serves as cofactor.

The catalysed reaction is 5-(2-hydroxyethyl)-4-methylthiazole + ATP = 4-methyl-5-(2-phosphooxyethyl)-thiazole + ADP + H(+). The protein operates within cofactor biosynthesis; thiamine diphosphate biosynthesis; 4-methyl-5-(2-phosphoethyl)-thiazole from 5-(2-hydroxyethyl)-4-methylthiazole: step 1/1. Its function is as follows. Catalyzes the phosphorylation of the hydroxyl group of 4-methyl-5-beta-hydroxyethylthiazole (THZ). The protein is Hydroxyethylthiazole kinase of Lactococcus lactis subsp. lactis (strain IL1403) (Streptococcus lactis).